The following is a 494-amino-acid chain: UDP-glucose 6-dehydrogenase (494 aa).

NAD(+)-binding positions include 11–16 (GAGYVG), aspartate 36, arginine 41, 89–93 (VNTPT), and 130–132 (STV). A disordered region spans residues 88–110 (SVNTPTKTYGMGKGRAADLKYIE). Positions 129–135 (KSTVPVR) are allosteric switch region. The active-site Proton donor/acceptor is glutamate 161. Residues 161–165 (EFLAE), 220–224 (KLAAN), arginine 260, and 267–273 (KASVGFG) each bind substrate. Glutamate 165 contributes to the NAD(+) binding site. The active-site Proton donor/acceptor is lysine 220. Cysteine 276 (nucleophile) is an active-site residue. An NAD(+)-binding site is contributed by 276–279 (CFQK). The tract at residues 321-325 (SLFNT) is important for formation of active hexamer structure. 338–339 (FK) lines the substrate pocket. Arginine 346 contributes to the NAD(+) binding site. Residue arginine 442 participates in substrate binding. The segment at 466 to 494 (VSAKRIPFASSCEIPKFSLQDPPVKKPRV) is disordered.

This sequence belongs to the UDP-glucose/GDP-mannose dehydrogenase family. As to quaternary structure, homohexamer.

The enzyme catalyses UDP-alpha-D-glucose + 2 NAD(+) + H2O = UDP-alpha-D-glucuronate + 2 NADH + 3 H(+). Its pathway is nucleotide-sugar biosynthesis; UDP-alpha-D-glucuronate biosynthesis; UDP-alpha-D-glucuronate from UDP-alpha-D-glucose: step 1/1. Its activity is regulated as follows. UDP-alpha-D-xylose (UDX) acts as a feedback inhibitor. It binds at the same site as the substrate, but functions as allosteric inhibitor by triggering a conformation change that disrupts the active hexameric ring structure and gives rise to an inactive, horseshoe-shaped hexamer. Catalyzes the formation of UDP-alpha-D-glucuronate, a constituent of complex glycosaminoglycans. Required for the biosynthesis of chondroitin sulfate and heparan sulfate. Required for embryonic development via its role in the biosynthesis of glycosaminoglycans. The sequence is that of UDP-glucose 6-dehydrogenase (UGDH) from Gallus gallus (Chicken).